The primary structure comprises 72 residues: Metallothionein-like protein type 2 (72 aa).

The protein belongs to the metallothionein superfamily. Type 15 family.

In terms of biological role, metallothioneins have a high content of cysteine residues that bind various heavy metals. The sequence is that of Metallothionein-like protein type 2 from Solanum lycopersicum (Tomato).